Reading from the N-terminus, the 424-residue chain is CinA-like protein (424 aa).

It belongs to the CinA family.

This chain is CinA-like protein, found in Shewanella sediminis (strain HAW-EB3).